Reading from the N-terminus, the 478-residue chain is Calcium/calmodulin-dependent protein kinase type II subunit alpha (478 aa).

A Phosphotyrosine modification is found at Tyr13. The Protein kinase domain maps to 13-271; it reads YQLFEELGKG…AAEALKHPWI (259 aa). Residues 19–27 and Lys42 each bind ATP; that span reads LGKGAFSVV. The active-site Proton acceptor is Asp135. Ser257 carries the phosphoserine modification. Thr286 is subject to Phosphothreonine; by autocatalysis. The tract at residues 290-300 is calmodulin-binding; that stretch reads LKKFNARRKLK. Residues 310–320 form an interaction with BAALC region; sequence TRNFSGGKSGG. The interval 314 to 341 is disordered; it reads SGGKSGGNKKNDGVKESSESTNTTIEDE. Positions 322 to 331 are enriched in basic and acidic residues; that stretch reads KKNDGVKESS. Phosphoserine occurs at positions 330, 331, and 333. Thr336 and Thr337 each carry phosphothreonine. At Ser404 the chain carries Phosphoserine.

It belongs to the protein kinase superfamily. CAMK Ser/Thr protein kinase family. CaMK subfamily. In terms of assembly, there are 4 genes encoding calcium/calmodulin-dependent protein kinase type II chains: CAMK2A, CAMK2B, CAMK2G and CAMK2D. The corresponding proteins assemble into homo- or heteromultimeric holoenzymes composed of 12 subunits with two hexameric rings stacked one on top of the other. Interacts with BAALC. Interacts with MPDZ. Interacts with SYN1. Interacts with CAMK2N2. Interacts with SYNGAP1. Interacts with SYNPO2. Interacts with SHANK3. Interacts with GRIN2B. Interacts with CACNB2. Interacts with LRRC7. Interacts with GRM5. Interacts with DAGLA (via C-terminal); this interaction is enhanced by autophosphorylation of CAMK2A at Thr-286. Interacts with CAMK2N1; this interaction requires CAMK2A activation by Ca(2+). It depends on Mg(2+) as a cofactor. Autophosphorylation of Thr-286 following activation by Ca(2+)/calmodulin. Phosphorylation of Thr-286 locks the kinase into an activated state. Post-translationally, palmitoylated. Probably palmitoylated by ZDHHC3 and ZDHHC7. Expressed in brain. In terms of tissue distribution, expressed in skeletal muscle.

Its subcellular location is the cytoplasm. It is found in the synapse. The protein resides in the postsynaptic density. The protein localises to the cell projection. It localises to the dendritic spine. Its subcellular location is the dendrite. It carries out the reaction L-seryl-[protein] + ATP = O-phospho-L-seryl-[protein] + ADP + H(+). The enzyme catalyses L-threonyl-[protein] + ATP = O-phospho-L-threonyl-[protein] + ADP + H(+). Its activity is regulated as follows. Activated by Ca(2+)/calmodulin. Binding of calmodulin results in conformational change that relieves intrasteric autoinhibition and allows autophosphorylation of Thr-286 which turns the kinase in a constitutively active form and confers to the kinase a Ca(2+)-independent activity. Calcium/calmodulin-dependent protein kinase that functions autonomously after Ca(2+)/calmodulin-binding and autophosphorylation, and is involved in various processes, such as synaptic plasticity, neurotransmitter release and long-term potentiation. Member of the NMDAR signaling complex in excitatory synapses, it regulates NMDAR-dependent potentiation of the AMPAR and therefore excitatory synaptic transmission. Regulates dendritic spine development. Also regulates the migration of developing neurons. Phosphorylates the transcription factor FOXO3 to activate its transcriptional activity. Phosphorylates the transcription factor ETS1 in response to calcium signaling, thereby decreasing ETS1 affinity for DNA. In response to interferon-gamma (IFN-gamma) stimulation, catalyzes phosphorylation of STAT1, stimulating the JAK-STAT signaling pathway. In response to interferon-beta (IFN-beta) stimulation, stimulates the JAK-STAT signaling pathway. Acts as a negative regulator of 2-arachidonoylglycerol (2-AG)-mediated synaptic signaling via modulation of DAGLA activity. Functionally, has no kinase activity. This chain is Calcium/calmodulin-dependent protein kinase type II subunit alpha (Camk2a), found in Mus musculus (Mouse).